The chain runs to 374 residues: Coiled-coil domain-containing protein 89 (374 aa).

The segment at 1–38 (MRAPMPQKEQAPRMDTSPPEERLEKQNEKLNNQEEEME) is disordered. T16 carries the phosphothreonine modification. Residues 19 to 32 (PEERLEKQNEKLNN) show a composition bias toward basic and acidic residues. A coiled-coil region spans residues 19–350 (PEERLEKQNE…YDELRLQSEA (332 aa)).

This sequence belongs to the CCDC89 family. As to quaternary structure, interacts with HEY1.

The protein localises to the cytoplasm. It localises to the nucleus. This Macaca fascicularis (Crab-eating macaque) protein is Coiled-coil domain-containing protein 89 (CCDC89).